A 650-amino-acid polypeptide reads, in one-letter code: Acetyl-coenzyme A synthetase (650 aa).

Residues 191 to 194 (RGGR), Thr311, and Asn335 each bind CoA. Residues 387-389 (GEP), 411-416 (DTWWQT), Asp500, and Arg515 contribute to the ATP site. Position 523 (Ser523) interacts with CoA. ATP is bound at residue Arg526. The Mg(2+) site is built by Val537, His539, and Val542. Residue Arg584 coordinates CoA. At Lys609 the chain carries N6-acetyllysine.

The protein belongs to the ATP-dependent AMP-binding enzyme family. Mg(2+) is required as a cofactor. In terms of processing, acetylated. Deacetylation by the SIR2-homolog deacetylase activates the enzyme.

The catalysed reaction is acetate + ATP + CoA = acetyl-CoA + AMP + diphosphate. Functionally, catalyzes the conversion of acetate into acetyl-CoA (AcCoA), an essential intermediate at the junction of anabolic and catabolic pathways. AcsA undergoes a two-step reaction. In the first half reaction, AcsA combines acetate with ATP to form acetyl-adenylate (AcAMP) intermediate. In the second half reaction, it can then transfer the acetyl group from AcAMP to the sulfhydryl group of CoA, forming the product AcCoA. This Shewanella sp. (strain MR-4) protein is Acetyl-coenzyme A synthetase.